The following is a 592-amino-acid chain: MRSHYCGDVNRSHVGEEVTLVGWVNRSRDLGGVVFLDLRDREGVIQVVYDPDLPEVFDVASTLRSEFCVQVKGLVRARPDSQINDQMRTGEIEVLGKALTILNSAPALPINMDKNQHNTEEQRLKYRYLDLRRPEMAERIIFRSKVTSAVRRFLDGNGFLDIETPILTKATPEGARDYLVPSRTYKGQFFALPQSPQLFKQLLMMSGFDRYYQIVKCFRDEDLRADRQPEFTQIDIETSFMTSAQVMDKTEEMVRGLFKELLNVDLGEFPKMTFAEAMRRYGSDKPDLRNPLELVDVADLVKDVDFKVFQEPANDSEGRVAVLCVPGGASLSRKQLDEYGKYVNIYGAKGLAWMKVNELENGLEGIQSPVLKFLSEEVVKGILERTGAANGDLILFGADKANIVAEAMGALRLKVGEDFDLLQGDWKPLWVVDFPMFERTSDGGLHAMHHPFTAPSGITPAELEADPTAAISDAYDMVLNGCELGGGSVRIYDAEMQSAVFRILGINDEEAQEKFGFLLEALKYGTPPHAGLAFGLDRMVMLMTGASSIRDVMAFPKTTTAACPLTNAPGFANPVQLEELGVSVVEAKKEQE.

Residue E173 participates in L-aspartate binding. An aspartate region spans residues 197-200 (QLFK). R219 contacts L-aspartate. ATP contacts are provided by residues 219–221 (RDE) and Q228. H449 lines the L-aspartate pocket. E483 is an ATP binding site. An L-aspartate-binding site is contributed by R490. Position 535–538 (535–538 (GLDR)) interacts with ATP.

Belongs to the class-II aminoacyl-tRNA synthetase family. Type 1 subfamily. Homodimer.

The protein localises to the cytoplasm. The enzyme catalyses tRNA(Asp) + L-aspartate + ATP = L-aspartyl-tRNA(Asp) + AMP + diphosphate. Its function is as follows. Catalyzes the attachment of L-aspartate to tRNA(Asp) in a two-step reaction: L-aspartate is first activated by ATP to form Asp-AMP and then transferred to the acceptor end of tRNA(Asp). The polypeptide is Aspartate--tRNA ligase (Shewanella loihica (strain ATCC BAA-1088 / PV-4)).